Reading from the N-terminus, the 208-residue chain is Ribosomal RNA large subunit methyltransferase E (208 aa).

5 residues coordinate S-adenosyl-L-methionine: Gly63, Trp65, Asp83, Asp99, and Asp124. Catalysis depends on Lys164, which acts as the Proton acceptor.

Belongs to the class I-like SAM-binding methyltransferase superfamily. RNA methyltransferase RlmE family.

It localises to the cytoplasm. The catalysed reaction is uridine(2552) in 23S rRNA + S-adenosyl-L-methionine = 2'-O-methyluridine(2552) in 23S rRNA + S-adenosyl-L-homocysteine + H(+). Its function is as follows. Specifically methylates the uridine in position 2552 of 23S rRNA at the 2'-O position of the ribose in the fully assembled 50S ribosomal subunit. In Hamiltonella defensa subsp. Acyrthosiphon pisum (strain 5AT), this protein is Ribosomal RNA large subunit methyltransferase E.